A 103-amino-acid polypeptide reads, in one-letter code: Small ribosomal subunit protein uS14c (103 aa).

Positions 34–56 (KVSPLSLSEKTKMQEKLQSLPRN) are disordered.

Belongs to the universal ribosomal protein uS14 family. In terms of assembly, part of the 30S ribosomal subunit.

The protein resides in the plastid. The protein localises to the chloroplast. Binds 16S rRNA, required for the assembly of 30S particles. In Saccharum hybrid (Sugarcane), this protein is Small ribosomal subunit protein uS14c.